The following is a 281-amino-acid chain: sn-glycerol-3-phosphate transport system permease protein UgpE (281 aa).

A run of 6 helical transmembrane segments spans residues 16-36 (LILG…AATL), 85-105 (FSIT…IVWF), 113-133 (FFWM…FPTV), 142-162 (LDSY…TFLF), 202-222 (ALFV…LLII), and 247-267 (WNSV…IVLV). Residues 77-268 (LLNSFVMAFS…IPPVVIVLVM (192 aa)) enclose the ABC transmembrane type-1 domain.

This sequence belongs to the binding-protein-dependent transport system permease family. UgpAE subfamily. In terms of assembly, the complex is composed of two ATP-binding proteins (UgpC), two transmembrane proteins (UgpA and UgpE) and a solute-binding protein (UgpB).

It localises to the cell inner membrane. Part of the ABC transporter complex UgpBAEC involved in sn-glycerol-3-phosphate (G3P) import. Probably responsible for the translocation of the substrate across the membrane. In Escherichia coli O157:H7, this protein is sn-glycerol-3-phosphate transport system permease protein UgpE (ugpE).